The following is a 338-amino-acid chain: Phenylalanine--tRNA ligase alpha subunit (338 aa).

E252 provides a ligand contact to Mg(2+).

This sequence belongs to the class-II aminoacyl-tRNA synthetase family. Phe-tRNA synthetase alpha subunit type 1 subfamily. As to quaternary structure, tetramer of two alpha and two beta subunits. Mg(2+) serves as cofactor.

Its subcellular location is the cytoplasm. The catalysed reaction is tRNA(Phe) + L-phenylalanine + ATP = L-phenylalanyl-tRNA(Phe) + AMP + diphosphate + H(+). In Pseudomonas fluorescens (strain ATCC BAA-477 / NRRL B-23932 / Pf-5), this protein is Phenylalanine--tRNA ligase alpha subunit.